Consider the following 364-residue polypeptide: UDP-N-acetylglucosamine--N-acetylmuramyl-(pentapeptide) pyrophosphoryl-undecaprenol N-acetylglucosamine transferase (364 aa).

UDP-N-acetyl-alpha-D-glucosamine contacts are provided by residues 13–15 (TGG), Asn125, Arg165, Ser192, and Gln293.

Belongs to the glycosyltransferase 28 family. MurG subfamily.

Its subcellular location is the cell inner membrane. It carries out the reaction di-trans,octa-cis-undecaprenyl diphospho-N-acetyl-alpha-D-muramoyl-L-alanyl-D-glutamyl-meso-2,6-diaminopimeloyl-D-alanyl-D-alanine + UDP-N-acetyl-alpha-D-glucosamine = di-trans,octa-cis-undecaprenyl diphospho-[N-acetyl-alpha-D-glucosaminyl-(1-&gt;4)]-N-acetyl-alpha-D-muramoyl-L-alanyl-D-glutamyl-meso-2,6-diaminopimeloyl-D-alanyl-D-alanine + UDP + H(+). Its pathway is cell wall biogenesis; peptidoglycan biosynthesis. Cell wall formation. Catalyzes the transfer of a GlcNAc subunit on undecaprenyl-pyrophosphoryl-MurNAc-pentapeptide (lipid intermediate I) to form undecaprenyl-pyrophosphoryl-MurNAc-(pentapeptide)GlcNAc (lipid intermediate II). This chain is UDP-N-acetylglucosamine--N-acetylmuramyl-(pentapeptide) pyrophosphoryl-undecaprenol N-acetylglucosamine transferase, found in Cereibacter sphaeroides (strain ATCC 17025 / ATH 2.4.3) (Rhodobacter sphaeroides).